The following is a 200-amino-acid chain: 6,7-dimethyl-8-ribityllumazine synthase (200 aa).

5-amino-6-(D-ribitylamino)uracil-binding positions include tryptophan 25, 59–61 (SWE), and 119–121 (VLI). A (2S)-2-hydroxy-3-oxobutyl phosphate-binding site is contributed by 124-125 (ET). Histidine 127 acts as the Proton donor in catalysis. Phenylalanine 152 serves as a coordination point for 5-amino-6-(D-ribitylamino)uracil. Arginine 166 is a binding site for (2S)-2-hydroxy-3-oxobutyl phosphate.

This sequence belongs to the DMRL synthase family. Homopentamer.

The enzyme catalyses (2S)-2-hydroxy-3-oxobutyl phosphate + 5-amino-6-(D-ribitylamino)uracil = 6,7-dimethyl-8-(1-D-ribityl)lumazine + phosphate + 2 H2O + H(+). It participates in cofactor biosynthesis; riboflavin biosynthesis; riboflavin from 2-hydroxy-3-oxobutyl phosphate and 5-amino-6-(D-ribitylamino)uracil: step 1/2. Functionally, catalyzes the formation of 6,7-dimethyl-8-ribityllumazine by condensation of 5-amino-6-(D-ribitylamino)uracil with 3,4-dihydroxy-2-butanone 4-phosphate. This is the penultimate step in the biosynthesis of riboflavin. In Pyricularia oryzae (strain 70-15 / ATCC MYA-4617 / FGSC 8958) (Rice blast fungus), this protein is 6,7-dimethyl-8-ribityllumazine synthase.